The following is a 244-amino-acid chain: 3-oxoacyl-[acyl-carrier-protein] reductase FabG (244 aa).

Residues 12–15 and T37 contribute to the NADP(+) site; that span reads GANQ. 2 residues coordinate Ca(2+): K50 and G53. Residues 59-60 and N86 contribute to the NADP(+) site; that span reads DL. S138 contacts substrate. N145 provides a ligand contact to Ca(2+). Catalysis depends on Y151, which acts as the Proton acceptor. NADP(+) contacts are provided by residues 151–155 and I184; that span reads YSASK. Q233 and T234 together coordinate Ca(2+).

The protein belongs to the short-chain dehydrogenases/reductases (SDR) family. As to quaternary structure, homotetramer.

The catalysed reaction is a (3R)-hydroxyacyl-[ACP] + NADP(+) = a 3-oxoacyl-[ACP] + NADPH + H(+). It functions in the pathway lipid metabolism; fatty acid biosynthesis. Catalyzes the NADPH-dependent reduction of beta-ketoacyl-ACP substrates to beta-hydroxyacyl-ACP products, the first reductive step in the elongation cycle of fatty acid biosynthesis. In Buchnera aphidicola subsp. Schizaphis graminum (strain Sg), this protein is 3-oxoacyl-[acyl-carrier-protein] reductase FabG (fabG).